A 220-amino-acid polypeptide reads, in one-letter code: FMN-dependent NADH:quinone oxidoreductase 1 (220 aa).

An FMN-binding site is contributed by 18 to 20 (SVS).

It belongs to the azoreductase type 1 family. As to quaternary structure, homodimer. FMN is required as a cofactor.

The enzyme catalyses 2 a quinone + NADH + H(+) = 2 a 1,4-benzosemiquinone + NAD(+). It carries out the reaction N,N-dimethyl-1,4-phenylenediamine + anthranilate + 2 NAD(+) = 2-(4-dimethylaminophenyl)diazenylbenzoate + 2 NADH + 2 H(+). Functionally, quinone reductase that provides resistance to thiol-specific stress caused by electrophilic quinones. In terms of biological role, also exhibits azoreductase activity. Catalyzes the reductive cleavage of the azo bond in aromatic azo compounds to the corresponding amines. The sequence is that of FMN-dependent NADH:quinone oxidoreductase 1 from Bacillus anthracis.